We begin with the raw amino-acid sequence, 1627 residues long: Pappalysin-1 (1627 aa).

An N-terminal signal peptide occupies residues 1 to 22 (MRLWSWVLHLGLLSAALGCGLA). The propeptide occupies 23–81 (ERPRRARRDPRAGRPPRPAAGPATCATRAARGRRASPPPPPPPGGAWEAVRVPRRRQQR). Residues 23 to 99 (ERPRRARRDP…PSPPSRALYF (77 aa)) form a disordered region. Low complexity predominate over residues 42-51 (AGPATCATRA). 17 cysteine pairs are disulfide-bonded: cysteine 144–cysteine 235, cysteine 327–cysteine 622, cysteine 332–cysteine 657, cysteine 414–cysteine 428, cysteine 424–cysteine 440, cysteine 457–cysteine 473, cysteine 474–cysteine 485, cysteine 583–cysteine 600, cysteine 587–cysteine 612, cysteine 710–cysteine 878, cysteine 713–cysteine 881, cysteine 753–cysteine 835, cysteine 775–cysteine 781, cysteine 947–cysteine 975, cysteine 960–cysteine 971, cysteine 983–cysteine 990, and cysteine 999–cysteine 1011. The metalloprotease stretch occupies residues 272-583 (METHGAHTAL…FRGISEIQSC (312 aa)). Asparagine 390 and asparagine 402 each carry an N-linked (GlcNAc...) asparagine glycan. A glycan (N-linked (GlcNAc...) asparagine) is linked at asparagine 429. N-linked (GlcNAc...) asparagine glycosylation is present at asparagine 480. Residue histidine 562 participates in Zn(2+) binding. Glutamate 563 is an active-site residue. Residues histidine 566 and histidine 572 each coordinate Zn(2+). Asparagine 601, asparagine 619, and asparagine 725 each carry an N-linked (GlcNAc...) asparagine glycan. The disordered stretch occupies residues 733–754 (SPSGHWSPREAEGHPDVEQPCK). Residues 739-751 (SPREAEGHPDVEQ) are compositionally biased toward basic and acidic residues. Residue asparagine 825 is glycosylated (N-linked (GlcNAc...) asparagine). Residue asparagine 1026 is glycosylated (N-linked (GlcNAc...) asparagine). Cystine bridges form between cysteine 1036–cysteine 1070, cysteine 1051–cysteine 1139, cysteine 1192–cysteine 1205, cysteine 1215–cysteine 1269, cysteine 1227–cysteine 1238, cysteine 1242–cysteine 1280, cysteine 1285–cysteine 1329, cysteine 1300–cysteine 1310, cysteine 1314–cysteine 1342, cysteine 1346–cysteine 1399, cysteine 1362–cysteine 1373, cysteine 1377–cysteine 1410, cysteine 1415–cysteine 1458, cysteine 1428–cysteine 1438, cysteine 1442–cysteine 1471, cysteine 1478–cysteine 1539, cysteine 1492–cysteine 1502, cysteine 1506–cysteine 1554, and cysteine 1558–cysteine 1576. 5 consecutive Sushi domains span residues 1213–1282 (TDCP…ACEP), 1283–1344 (VDCS…LCEL), 1345–1412 (MCLA…ACVP), 1413–1473 (VTCD…VCQE), and 1476–1556 (GQCS…HCVK). 2 N-linked (GlcNAc...) asparagine glycosylation sites follow: asparagine 1222 and asparagine 1226. The N-linked (GlcNAc...) asparagine glycan is linked to asparagine 1323. N-linked (GlcNAc...) asparagine glycosylation is present at asparagine 1465. N-linked (GlcNAc...) asparagine glycosylation occurs at asparagine 1519.

This sequence belongs to the peptidase M43B family. As to quaternary structure, homodimer; disulfide-linked. In pregnancy serum, predominantly found as a disulfide-linked 2:2 heterotetramer with the proform of PRG2. Zn(2+) is required as a cofactor. In terms of processing, there appear to be no free sulfhydryl groups. As to expression, high levels in placenta and pregnancy serum. In placenta, expressed in X cells in septa and anchoring villi, and in syncytiotrophoblasts in the chorionic villi. Lower levels are found in a variety of other tissues including kidney, myometrium, endometrium, ovaries, breast, prostate, bone marrow, colon, fibroblasts and osteoblasts.

Its subcellular location is the secreted. It catalyses the reaction Cleavage of the 135-Met-|-Lys-136 bond in insulin-like growth factor binding protein (IGFBP)-4, and the 143-Ser-|-Lys-144 bond in IGFBP-5.. Its activity is regulated as follows. Inhibited by complexation with the proform of PRG2. In terms of biological role, metalloproteinase which specifically cleaves IGFBP-4 and IGFBP-5, resulting in release of bound IGF. Cleavage of IGFBP-4 is dramatically enhanced by the presence of IGF, whereas cleavage of IGFBP-5 is slightly inhibited by the presence of IGF. The protein is Pappalysin-1 (PAPPA) of Homo sapiens (Human).